The following is a 762-amino-acid chain: Protein PHTF1 (762 aa).

The region spanning 6 to 150 (RDAISWYQKK…VHCQIVSTQI (145 aa)) is the PHTF domain. 3 consecutive transmembrane segments (helical) span residues 77–97 (GLVRVVFFPLFSSWWIQVTSL), 99–119 (IFVWLLLLYLMQVTAIVLYLM), and 121–141 (PIVSVSEVLGPLCLMLLMGTV). The disordered stretch occupies residues 152–184 (RPSGNNGNRRRRKLRKTVNGDGTRDNGNNSPDK). N-linked (GlcNAc...) asparagine glycans are attached at residues N179 and N224. Phosphoserine is present on residues S272, S276, S277, S334, and S336. Residues 345-415 (AAFSQGSRSG…NTLHSGTKRD (71 aa)) form a disordered region. Over residues 348–364 (SQGSRSGMSGGSRSLNL) the composition is skewed to low complexity. A glycan (N-linked (GlcNAc...) asparagine) is linked at N363. Residues 365 to 376 (SRRDSESTRHDS) show a composition bias toward basic and acidic residues. N-linked (GlcNAc...) asparagine glycosylation occurs at N431. The next 4 membrane-spanning stretches (helical) occupy residues 473–493 (GVGYQMLGNAVTIGLALFPFL), 515–535 (TLFCGAPPVTPVVILSIINFF), 611–631 (VVVSSVFLLTLSIAFICCAQV), and 645–665 (WEFLIWETALLLFLLRLASLG). Residues N674 and N733 are each glycosylated (N-linked (GlcNAc...) asparagine). A helical transmembrane segment spans residues 737–757 (VVILSAVSGVISDLLGFNIRL).

In terms of assembly, interacts with FEM1B. As to expression, highly expressed in testis.

It localises to the endoplasmic reticulum membrane. Its subcellular location is the golgi apparatus. The protein resides in the cis-Golgi network membrane. This Rattus norvegicus (Rat) protein is Protein PHTF1.